Consider the following 172-residue polypeptide: Large ribosomal subunit protein uL10 (172 aa).

This sequence belongs to the universal ribosomal protein uL10 family. As to quaternary structure, part of the ribosomal stalk of the 50S ribosomal subunit. The N-terminus interacts with L11 and the large rRNA to form the base of the stalk. The C-terminus forms an elongated spine to which L12 dimers bind in a sequential fashion forming a multimeric L10(L12)X complex.

Its function is as follows. Forms part of the ribosomal stalk, playing a central role in the interaction of the ribosome with GTP-bound translation factors. This Lawsonia intracellularis (strain PHE/MN1-00) protein is Large ribosomal subunit protein uL10.